Here is a 396-residue protein sequence, read N- to C-terminus: Elongation factor Tu (396 aa).

One can recognise a tr-type G domain in the interval 10 to 206; sequence KAHVNIGTIG…AVDEYIPDPV (197 aa). A G1 region spans residues 19-26; that stretch reads GHVDHGKT. 19–26 contributes to the GTP binding site; that stretch reads GHVDHGKT. Position 26 (Thr26) interacts with Mg(2+). The interval 62–66 is G2; sequence GITIN. The interval 83–86 is G3; the sequence is DAPG. GTP is bound by residues 83 to 87 and 138 to 141; these read DAPGH and NKSD. The segment at 138–141 is G4; that stretch reads NKSD. The segment at 176–178 is G5; it reads SAL.

Belongs to the TRAFAC class translation factor GTPase superfamily. Classic translation factor GTPase family. EF-Tu/EF-1A subfamily. In terms of assembly, monomer.

Its subcellular location is the cytoplasm. It carries out the reaction GTP + H2O = GDP + phosphate + H(+). GTP hydrolase that promotes the GTP-dependent binding of aminoacyl-tRNA to the A-site of ribosomes during protein biosynthesis. The chain is Elongation factor Tu from Micrococcus luteus (Micrococcus lysodeikticus).